The primary structure comprises 317 residues: 1D-myo-inositol 2-acetamido-2-deoxy-alpha-D-glucopyranoside deacetylase (317 aa).

3 residues coordinate Zn(2+): His-15, Asp-18, and His-154. The segment at 289-317 is disordered; it reads QDLDNRNPNSQPPADQAREDHLLTGLGFA.

The protein belongs to the MshB deacetylase family. Zn(2+) is required as a cofactor.

It catalyses the reaction 1D-myo-inositol 2-acetamido-2-deoxy-alpha-D-glucopyranoside + H2O = 1D-myo-inositol 2-amino-2-deoxy-alpha-D-glucopyranoside + acetate. Its function is as follows. Catalyzes the deacetylation of 1D-myo-inositol 2-acetamido-2-deoxy-alpha-D-glucopyranoside (GlcNAc-Ins) in the mycothiol biosynthesis pathway. The polypeptide is 1D-myo-inositol 2-acetamido-2-deoxy-alpha-D-glucopyranoside deacetylase (Segniliparus rotundus (strain ATCC BAA-972 / CDC 1076 / CIP 108378 / DSM 44985 / JCM 13578)).